The chain runs to 316 residues: D-alanine--D-alanine ligase (316 aa).

An ATP-grasp domain is found at 109–304 (KRLWRGMDLP…FDEMVLQILA (196 aa)). Residue 135–190 (AADLGLPLIVKPAREGSSLGMMKVESIEALQSAYREAVIFDTAVFAERWLPGAEYT) coordinates ATP. Residues Asp-258, Glu-271, and Asn-273 each contribute to the Mg(2+) site.

It belongs to the D-alanine--D-alanine ligase family. It depends on Mg(2+) as a cofactor. Requires Mn(2+) as cofactor.

It is found in the cytoplasm. The catalysed reaction is 2 D-alanine + ATP = D-alanyl-D-alanine + ADP + phosphate + H(+). Its pathway is cell wall biogenesis; peptidoglycan biosynthesis. Its function is as follows. Cell wall formation. This is D-alanine--D-alanine ligase from Nitrosococcus oceani (strain ATCC 19707 / BCRC 17464 / JCM 30415 / NCIMB 11848 / C-107).